Here is a 340-residue protein sequence, read N- to C-terminus: MIFIDACKRQPTPYTPIWMMRQAGRYLTEYMQTRERAGSFLDLCKNPELACEVTLQPVEILDVDAAILFSDILVVPMEMGLELGFYQGEGPRFSQTIRTQKDLLLLQEGAENRLGYVYEAIHRIRESLHQEKALIGFCGSPWTLATYMIEGEGSKTYAHSKKMLYSDPKLLHAILAQVSEALKGYLAKQIEAGVNAVMVFDSWAAALEESVYFEFSWEYMKEIASFVKARYPHIPVMLFPKGIAGFLDKIEGDFDVFGVDWSTPMDLAKAKLGDRYVLQGNLEPARLYDRAKMEEGVDHILSIMGKESGHVFNLGHGMMPDLPRENAIELVKMVRQKSAR.

Substrate-binding positions include 21–25, Phe40, Asp71, Tyr147, Ser202, and His316; that span reads RQAGR.

This sequence belongs to the uroporphyrinogen decarboxylase family. In terms of assembly, homodimer.

It localises to the cytoplasm. It catalyses the reaction uroporphyrinogen III + 4 H(+) = coproporphyrinogen III + 4 CO2. Its pathway is porphyrin-containing compound metabolism; protoporphyrin-IX biosynthesis; coproporphyrinogen-III from 5-aminolevulinate: step 4/4. In terms of biological role, catalyzes the decarboxylation of four acetate groups of uroporphyrinogen-III to yield coproporphyrinogen-III. This chain is Uroporphyrinogen decarboxylase, found in Wolinella succinogenes (strain ATCC 29543 / DSM 1740 / CCUG 13145 / JCM 31913 / LMG 7466 / NCTC 11488 / FDC 602W) (Vibrio succinogenes).